The following is a 131-amino-acid chain: Class I hydrophobin POH2 (131 aa).

An N-terminal signal peptide occupies residues 1–21 (MFFRTSSLFTTIVAFTVMAAA). 4 cysteine pairs are disulfide-bonded: C50–C110, C57–C104, C58–C91, and C111–C124. 2 N-linked (GlcNAc...) asparagine glycosylation sites follow: N115 and N128.

The protein belongs to the fungal hydrophobin family. As to quaternary structure, self-assembles to form functional amyloid fibrils called rodlets. Self-assembly into fibrillar rodlets occurs spontaneously at hydrophobic:hydrophilic interfaces and the rodlets further associate laterally to form amphipathic monolayers. Expressionn is switched off in the fruiting bodies but abundantly expressed in the vegetative mycelium of both monokaryon and dikaryon.

The protein localises to the secreted. It localises to the cell wall. In terms of biological role, aerial growth, conidiation, and dispersal of filamentous fungi in the environment rely upon a capability of their secreting small amphipathic proteins called hydrophobins (HPBs) with low sequence identity. Class I can self-assemble into an outermost layer of rodlet bundles on aerial cell surfaces, conferring cellular hydrophobicity that supports fungal growth, development and dispersal; whereas Class II form highly ordered films at water-air interfaces through intermolecular interactions but contribute nothing to the rodlet structure. POH2 is a class I hydrophobin that causes a large drop in the water-surface tension, enabling hyphae to breach the interface and grow into the air, in both the primary and the secondary mycelium. In the latter mycelium POH2 maight also play a role in the emergence of fruiting bodies. Secreted POH2 could also play a role in facilitating lignin degradation. This chain is Class I hydrophobin POH2, found in Pleurotus ostreatus (Oyster mushroom).